The following is a 453-amino-acid chain: Carbamoyl phosphate synthase arginine-specific small chain (453 aa).

The N-terminal 28 residues, 1 to 28, are a transit peptide targeting the mitochondrion; it reads MFARVFKAMPARASALTSVNASIPARFM. The region spanning 219-406 is the Glutamine amidotransferase type-1 domain; the sequence is HVAVIDCGVK…IDSVKKYKAS (188 aa). The active-site Nucleophile is Cys-295. Residues His-379 and Glu-381 contribute to the active site.

The protein belongs to the CarA family. In terms of assembly, heterodimer composed of 2 chains; the small (or glutamine) chain promotes the hydrolysis of glutamine to ammonia, which is used by the large (or ammonia) chain to synthesize carbamoyl phosphate.

Its subcellular location is the mitochondrion matrix. The catalysed reaction is hydrogencarbonate + L-glutamine + 2 ATP + H2O = carbamoyl phosphate + L-glutamate + 2 ADP + phosphate + 2 H(+). It carries out the reaction L-glutamine + H2O = L-glutamate + NH4(+). The protein operates within amino-acid biosynthesis; L-arginine biosynthesis; carbamoyl phosphate from bicarbonate: step 1/1. Its function is as follows. Small subunit of the arginine-specific carbamoyl phosphate synthase (CPSase). CPSase catalyzes the formation of carbamoyl phosphate from the ammonia moiety of glutamine, carbonate, and phosphate donated by ATP, the first step of the arginine biosynthetic pathway. The small subunit (glutamine amidotransferase) binds and cleaves glutamine to supply the large subunit with the substrate ammonia. This Aspergillus fumigatus (strain ATCC MYA-4609 / CBS 101355 / FGSC A1100 / Af293) (Neosartorya fumigata) protein is Carbamoyl phosphate synthase arginine-specific small chain (cpa1).